Here is a 708-residue protein sequence, read N- to C-terminus: DNA ligase 2 (708 aa).

NAD(+) contacts are provided by residues Asp-71–Asp-75, Ser-121–Leu-122, and Glu-153. Lys-155 serves as the catalytic N6-AMP-lysine intermediate. Arg-176, Glu-213, Lys-330, and Lys-354 together coordinate NAD(+). Zn(2+) contacts are provided by Cys-448, Cys-451, Cys-466, and Cys-471. The region spanning Ala-627–Glu-708 is the BRCT domain.

This sequence belongs to the NAD-dependent DNA ligase family. LigA subfamily. Mg(2+) is required as a cofactor. Requires Mn(2+) as cofactor.

The enzyme catalyses NAD(+) + (deoxyribonucleotide)n-3'-hydroxyl + 5'-phospho-(deoxyribonucleotide)m = (deoxyribonucleotide)n+m + AMP + beta-nicotinamide D-nucleotide.. Functionally, DNA ligase that catalyzes the formation of phosphodiester linkages between 5'-phosphoryl and 3'-hydroxyl groups in double-stranded DNA using NAD as a coenzyme and as the energy source for the reaction. It is essential for DNA replication and repair of damaged DNA. This is DNA ligase 2 from Opitutus terrae (strain DSM 11246 / JCM 15787 / PB90-1).